Here is a 734-residue protein sequence, read N- to C-terminus: ATP-dependent RNA helicase SUV3L, mitochondrial (734 aa).

The transit peptide at 1 to 60 directs the protein to the mitochondrion; sequence MAAAAAIAAALLRRSTSSQHHRRILLLPLLSHLQRAAPRSPSPWDPPPHHRFFFSSDVTA. The disordered stretch occupies residues 58-88; the sequence is VTAEGDSKPRPPLDGKQLWREVSTSEPATGA. Residues 62 to 76 show a composition bias toward basic and acidic residues; sequence GDSKPRPPLDGKQLW. The 159-residue stretch at 198–356 folds into the Helicase ATP-binding domain; that stretch reads FARAMRRRVV…RFKPLVVEAK (159 aa). 211-218 lines the ATP pocket; it reads GPTNSGKT. Residues 357–525 enclose the Helicase C-terminal domain; it reads TLLGDLKNVR…SFAIQFPDLT (169 aa). Asparagine 594 and asparagine 614 each carry an N-linked (GlcNAc...) asparagine glycan. Positions 667–734 are disordered; that stretch reads ASWKPTSRQQ…QDPSSLNFVA (68 aa). Residues 684–693 show a composition bias toward acidic residues; the sequence is EEDNDVEQAS. Over residues 695 to 709 the composition is skewed to basic and acidic residues; sequence DNAKNDSEDGYERSI. Asparagine 699 carries N-linked (GlcNAc...) asparagine glycosylation. The segment covering 725 to 734 has biased composition (polar residues); it reads QDPSSLNFVA.

The protein belongs to the helicase family. Homodimer; in free form. Component of the mitochondrial degradosome (mtEXO) complex which is a heteropentamer containing 2 copies of SUPV3L1 and 3 copies of PNPT1. Mg(2+) serves as cofactor. Mn(2+) is required as a cofactor.

The protein resides in the nucleus. It localises to the mitochondrion matrix. Its subcellular location is the mitochondrion nucleoid. The catalysed reaction is ATP + H2O = ADP + phosphate + H(+). Major helicase player in mitochondrial RNA metabolism. Component of the mitochondrial degradosome (mtEXO) complex, that degrades 3' overhang double-stranded RNA with a 3'-to-5' directionality in an ATP-dependent manner. ATPase and ATP-dependent multisubstrate helicase, able to unwind double-stranded (ds) DNA and RNA, and RNA/DNA heteroduplexes in the 5'-to-3' direction. Plays a role in the RNA surveillance system in mitochondria; regulates the stability of mature mRNAs, the removal of aberrantly formed mRNAs and the rapid degradation of non coding processing intermediates. Confers salinity and drought stress tolerances by maintaining both photosynthesis and antioxidant machinery, probably via an increase in plant hormones levels such as gibberellic acid (GA(3)), the cytokinin zeatin (Z) and indole-3-acetic acid (IAA). The protein is ATP-dependent RNA helicase SUV3L, mitochondrial of Oryza sativa subsp. japonica (Rice).